The following is a 459-amino-acid chain: Bifunctional protein GlmU (459 aa).

The interval 1-230 (MSNRFAVILA…FDETLGVNDR (230 aa)) is pyrophosphorylase. UDP-N-acetyl-alpha-D-glucosamine is bound by residues 9–12 (LAAG), lysine 23, glutamine 73, and 78–79 (GT). Residue aspartate 103 coordinates Mg(2+). Glycine 140, glutamate 155, asparagine 170, and asparagine 228 together coordinate UDP-N-acetyl-alpha-D-glucosamine. Asparagine 228 is a Mg(2+) binding site. A linker region spans residues 231–251 (VALSQAEIIMKNRINRKNMVN). Residues 252–459 (GVTIIDPSNT…VDQLLNKKKS (208 aa)) form an N-acetyltransferase region. UDP-N-acetyl-alpha-D-glucosamine is bound by residues arginine 333 and lysine 351. Catalysis depends on histidine 363, which acts as the Proton acceptor. Tyrosine 366 and asparagine 377 together coordinate UDP-N-acetyl-alpha-D-glucosamine. Residues 386-387 (NY), alanine 423, and arginine 440 contribute to the acetyl-CoA site.

The protein in the N-terminal section; belongs to the N-acetylglucosamine-1-phosphate uridyltransferase family. This sequence in the C-terminal section; belongs to the transferase hexapeptide repeat family. In terms of assembly, homotrimer. Mg(2+) serves as cofactor.

The protein resides in the cytoplasm. It carries out the reaction alpha-D-glucosamine 1-phosphate + acetyl-CoA = N-acetyl-alpha-D-glucosamine 1-phosphate + CoA + H(+). The enzyme catalyses N-acetyl-alpha-D-glucosamine 1-phosphate + UTP + H(+) = UDP-N-acetyl-alpha-D-glucosamine + diphosphate. Its pathway is nucleotide-sugar biosynthesis; UDP-N-acetyl-alpha-D-glucosamine biosynthesis; N-acetyl-alpha-D-glucosamine 1-phosphate from alpha-D-glucosamine 6-phosphate (route II): step 2/2. It participates in nucleotide-sugar biosynthesis; UDP-N-acetyl-alpha-D-glucosamine biosynthesis; UDP-N-acetyl-alpha-D-glucosamine from N-acetyl-alpha-D-glucosamine 1-phosphate: step 1/1. The protein operates within bacterial outer membrane biogenesis; LPS lipid A biosynthesis. Its function is as follows. Catalyzes the last two sequential reactions in the de novo biosynthetic pathway for UDP-N-acetylglucosamine (UDP-GlcNAc). The C-terminal domain catalyzes the transfer of acetyl group from acetyl coenzyme A to glucosamine-1-phosphate (GlcN-1-P) to produce N-acetylglucosamine-1-phosphate (GlcNAc-1-P), which is converted into UDP-GlcNAc by the transfer of uridine 5-monophosphate (from uridine 5-triphosphate), a reaction catalyzed by the N-terminal domain. This is Bifunctional protein GlmU from Bacillus cereus (strain G9842).